Consider the following 488-residue polypeptide: Proline--tRNA ligase (488 aa).

This sequence belongs to the class-II aminoacyl-tRNA synthetase family. ProS type 3 subfamily. As to quaternary structure, homodimer.

It is found in the cytoplasm. It catalyses the reaction tRNA(Pro) + L-proline + ATP = L-prolyl-tRNA(Pro) + AMP + diphosphate. Its function is as follows. Catalyzes the attachment of proline to tRNA(Pro) in a two-step reaction: proline is first activated by ATP to form Pro-AMP and then transferred to the acceptor end of tRNA(Pro). The sequence is that of Proline--tRNA ligase from Pyrobaculum arsenaticum (strain DSM 13514 / JCM 11321 / PZ6).